Reading from the N-terminus, the 150-residue chain is Urease accessory protein UreE (150 aa).

Belongs to the UreE family.

The protein localises to the cytoplasm. Involved in urease metallocenter assembly. Binds nickel. Probably functions as a nickel donor during metallocenter assembly. The chain is Urease accessory protein UreE from Staphylococcus epidermidis (strain ATCC 35984 / DSM 28319 / BCRC 17069 / CCUG 31568 / BM 3577 / RP62A).